Consider the following 471-residue polypeptide: uncharacterized protein (471 aa).

Helical transmembrane passes span 15 to 35 (LWGP…TILL), 66 to 86 (PLQA…IVGV), 89 to 109 (AIMF…LFAM), 147 to 167 (WLGV…IMVQ), 179 to 199 (FSFN…LVVI), 210 to 230 (EFVV…IVLM), 237 to 257 (AFFS…GGFA), 303 to 323 (VIGI…IVLA), 353 to 373 (GYFV…VVIF), 386 to 406 (LAGH…AAGG), and 410 to 430 (IWGV…IALL).

Belongs to the alanine or glycine:cation symporter (AGCS) (TC 2.A.25) family.

It is found in the cell membrane. This is an uncharacterized protein from Bacillus subtilis (strain 168).